A 1016-amino-acid polypeptide reads, in one-letter code: Poly [ADP-ribose] polymerase 1 (1016 aa).

At A2 the chain carries N-acetylalanine. The PARP-type 1 zinc-finger motif lies at 9-93 (YRVEYAKSGR…TIKKMAETGG (85 aa)). Zn(2+)-binding residues include C21 and C24. A Phosphoserine modification is found at S41. H53 and C56 together coordinate Zn(2+). K100 and K108 each carry N6-acetyllysine. The PARP-type 2 zinc finger occupies 116 to 206 (FGAGYAKSNR…TLKKQLPAIK (91 aa)). Positions 128 and 131 each coordinate Zn(2+). K134 carries the post-translational modification N6-acetyllysine. Residues H162 and C165 each contribute to the Zn(2+) site. S180 and S188 each carry phosphoserine. K206 is covalently cross-linked (Glycyl lysine isopeptide (Lys-Gly) (interchain with G-Cter in SUMO1); alternate). K206 is covalently cross-linked (Glycyl lysine isopeptide (Lys-Gly) (interchain with G-Cter in SUMO2); alternate). 2 consecutive short sequence motifs (nuclear localization signal) follow at residues 210 to 212 (KRK) and 224 to 229 (KKKSKK). Residues 228–362 (KKEKDKEIKL…IKKQDRIFPP (135 aa)) form the PADR1 zinc-binding domain. A Glycyl lysine isopeptide (Lys-Gly) (interchain with G-Cter in SUMO2) cross-link involves residue K252. Residues S277 and S280 each carry the phosphoserine modification. Residues 293 to 335 (GALLPCEECSGQLVFKGDAYYCTGDVTAWTKCMVKTQTPNRKE) are zinc ribbon. Residues C298, C301, C314, and C324 each coordinate Zn(2+). A disordered region spans residues 360 to 390 (FPPESSTPVGAAAPPSAASAPAAVHSGPPDK). Residues 365 to 386 (STPVGAAAPPSAASAPAAVHSG) show a composition bias toward low complexity. Residues 376–526 (AASAPAAVHS…GTNKSEKRMK (151 aa)) form an automodification domain region. The BRCT domain maps to 387 to 478 (PPDKPLSNMK…KSLQELLSTH (92 aa)). D389 carries the polyADP-ribosyl aspartic acid modification. 7 positions are modified to polyADP-ribosyl glutamic acid: E409, E415, E437, E446, E447, E450, and E458. A Glycyl lysine isopeptide (Lys-Gly) (interchain with G-Cter in SUMO2) cross-link involves residue K469. PolyADP-ribosyl glutamic acid occurs at positions 473 and 486. A Glycyl lysine isopeptide (Lys-Gly) (interchain with G-Cter in SUMO1); alternate cross-link involves residue K488. K488 participates in a covalent cross-link: Glycyl lysine isopeptide (Lys-Gly) (interchain with G-Cter in SUMO2); alternate. PolyADP-ribosyl glutamic acid occurs at positions 490 and 493. The tract at residues 494–523 (AVGPKGKSGAAPSKKSKGPVKEEGTNKSEK) is disordered. The span at 496 to 506 (GPKGKSGAAPS) shows a compositional bias: low complexity. ADP-ribosylserine occurs at positions 501, 506, and 509. Residues 512 to 523 (PVKEEGTNKSEK) show a composition bias toward basic and acidic residues. Residue K514 forms a Glycyl lysine isopeptide (Lys-Gly) (interchain with G-Cter in SUMO2) linkage. PolyADP-ribosyl glutamic acid occurs at positions 515 and 516. Residue S521 is modified to ADP-ribosylserine. PolyADP-ribosyl glutamic acid is present on E522. K523 is subject to N6-(ADP-ribosyl)lysine. K530 participates in a covalent cross-link: Glycyl lysine isopeptide (Lys-Gly) (interchain with G-Cter in SUMO2). Positions 544-640 (NAHVLEKGGK…KNFTKHPKKF (97 aa)) constitute a WGR domain. The residue at position 596 (T596) is a Phosphothreonine. K602 and K623 each carry N6-acetyllysine. The PARP alpha-helical domain maps to 664–781 (KSKLPKPVQN…DIEVAYSLLR (118 aa)). K750 is covalently cross-linked (Glycyl lysine isopeptide (Lys-Gly) (interchain with G-Cter in SUMO1); alternate). A Glycyl lysine isopeptide (Lys-Gly) (interchain with G-Cter in SUMO2); alternate cross-link involves residue K750. Residues S784 and S788 each carry the phosphoserine modification. A PARP catalytic domain is found at 790–1016 (DPIDVNYEKL…LKFNFKTSLW (227 aa)). NAD(+) is bound by residues 864–866 (HGS), G873, R880, and S906. Catalysis depends on E990, which acts as the For poly [ADP-ribose] polymerase activity.

Belongs to the ARTD/PARP family. As to quaternary structure, homodimer; PARP-type zinc-fingers from separate PARP1 molecules form a dimer module that specifically recognizes DNA strand breaks. Heterodimer; heterodimerizes with PARP2. Interacts (via the PARP catalytic domain) with HPF1. Interacts with NMNAT1. Interacts with nucleosomes; with a preference for nucleosomes containing H2A.X. Interacts with APTX. Component of a base excision repair (BER) complex, containing at least XRCC1, PARP1, PARP2, POLB and LRIG3. Interacts with SRY. The SWAP complex consists of NPM1, NCL, PARP1 and SWAP70. Interacts with TIAM2. Interacts with PARP3; leading to activate PARP1 in absence of DNA. Interacts (when poly-ADP-ribosylated) with CHD1L (via macro domain). Interacts with the DNA polymerase alpha catalytic subunit POLA1; this interaction functions as part of the control of replication fork progression. Interacts with EEF1A1 and TXK. Interacts with RNF4. Interacts with RNF146. Interacts with ZNF423. Interacts with APLF. Interacts with SNAI1 (via zinc fingers); the interaction requires SNAI1 to be poly-ADP-ribosylated and non-phosphorylated (active) by GSK3B. Interacts (when poly-ADP-ribosylated) with PARP9. Interacts with NR4A3; activates PARP1 by improving acetylation of PARP1 and suppressing the interaction between PARP1 and SIRT1. Interacts (via catalytic domain) with PUM3; the interaction inhibits the poly-ADP-ribosylation activity of PARP1 and the degradation of PARP1 by CASP3 following genotoxic stress. Interacts with ZNF365. Interacts with RRP1B. Interacts with TIMELESS; the interaction is direct. Interacts with CGAS; leading to impede the formation of the PARP1-TIMELESS complex. Interacts with KHDC3L, the interaction is increased following the formation of DNA double-strand breaks. Interacts (when auto-poly-ADP-ribosylated) with XRCC1; leading to inhibit PARP1 ADP-ribosyltransferase activity. Interacts with SPINDOC; promoting PARP1 ADP-ribosyltransferase activity. Interacts with BANF1; leading to inhibit PARP1 ADP-ribosyltransferase activity in response to oxidative DNA damage. Interacts (when sumoylated and ubiquitinated) with VCP/p97; leading to its extraction from chromatin. Interacts with YARS1; promoting PARP1 ADP-ribosyltransferase activity. Interacts with PACMP micropeptide; Interacts with PACMP micropeptide; interaction. Interacts (when poly-ADP-ribosylated) with isoform 1 of MACROH2A1; MACROH2A1 specifically binds to poly-ADP-ribose chains and inhibits PARP1 activity, limiting the consumption of nuclear NAD(+). Interacts with CARM1; promoting recruitment to replication forks. Interacts with RECQL. Interacts with ZNF32; the interaction reshapes ZNF432 interacting proteins. Interacts with TPRN; TPRN interacts with a number of DNA damage response proteins, is recruited to sites of DNA damage and may play a role in DNA damage repair. In terms of assembly, interacts (when auto-poly-ADP-ribosylated) with AIFM1. In terms of processing, poly-ADP-ribosylated on serine, glutamate and aspartate residues by autocatalysis. Auto-ADP-ribosylation on serine takes place following interaction with HPF1. Auto poly-ADP-ribosylation on serine residues promotes its dissociation from chromatin. Poly-ADP-ribosylated by PARP2; poly-ADP-ribosylation mediates the recruitment of CHD1L to DNA damage sites. Mono-ADP-ribosylated at Lys-523 by SIRT6 in response to oxidative stress, promoting recruitment to double-strand breaks (DSBs) sites. S-nitrosylated, leading to inhibit transcription regulation activity. Post-translationally, phosphorylated at Thr-596 by PRKDC in response to DNA damage following virus infection, promoting its translocation to the cytosol. Phosphorylated by TXK. In terms of processing, proteolytically cleaved by caspase-3 (CASP3) and caspase-7 (CASP7) in response to apoptosis to generate the Poly [ADP-ribose] polymerase 1, processed N-terminus and Poly [ADP-ribose] polymerase 1, processed C-terminus forms. Sumoylated with SUMO1 or SUMO2 by PIAS4 following prolonged residence (trapping) to chromatin. Sumoylation promotes ubiquitination by RNF4 and removal from chromatin by VCP/p97. Post-translationally, ubiquitinated by RNF4 following sumoylation by PIAS4 in response to prolonged residence (trapping) to chromatin. Ubiquitination promotes removal from chromatin by VCP/p97.

Its subcellular location is the chromosome. The protein localises to the nucleus. It localises to the nucleolus. The protein resides in the cytoplasm. It is found in the cytosol. It carries out the reaction NAD(+) + (ADP-D-ribosyl)n-acceptor = nicotinamide + (ADP-D-ribosyl)n+1-acceptor + H(+).. The catalysed reaction is L-seryl-[protein] + NAD(+) = O-(ADP-D-ribosyl)-L-seryl-[protein] + nicotinamide + H(+). The enzyme catalyses L-aspartyl-[protein] + NAD(+) = 4-O-(ADP-D-ribosyl)-L-aspartyl-[protein] + nicotinamide. It catalyses the reaction L-glutamyl-[protein] + NAD(+) = 5-O-(ADP-D-ribosyl)-L-glutamyl-[protein] + nicotinamide. It carries out the reaction L-tyrosyl-[protein] + NAD(+) = O-(ADP-D-ribosyl)-L-tyrosyl-[protein] + nicotinamide + H(+). The catalysed reaction is L-histidyl-[protein] + NAD(+) = N(tele)-(ADP-D-ribosyl)-L-histidyl-[protein] + nicotinamide + H(+). Its activity is regulated as follows. ADP-ribosyltransferase activity is regulated via an allosteric activation mechanism. In absence of activation signal, PARP1 is autoinhibited by the PARP alpha-helical domain (also named HD region), which prevents effective NAD(+)-binding. Activity is highly stimulated by signals, such as DNA strand breaks. Binding to damaged DNA unfolds the PARP alpha-helical domain, relieving autoinhibition. Poly-ADP-ribosyltransferase activity is tightly regulated and PARP1 is removed from damaged chromatin following initial poly-ADP-ribosylation of chromatin to avoid prolonged residence (trapping) that has cytotoxic consequences. A number of factors (VCP/p97) or post-translational modifications (auto-poly-ADP-ribosylation or ubiquitination) promote PARP1 removal from chromatin. Poly-ADP-ribosyltransferase that mediates poly-ADP-ribosylation of proteins and plays a key role in DNA repair. Mediates glutamate, aspartate, serine, histidine or tyrosine ADP-ribosylation of proteins: the ADP-D-ribosyl group of NAD(+) is transferred to the acceptor carboxyl group of target residues and further ADP-ribosyl groups are transferred to the 2'-position of the terminal adenosine moiety, building up a polymer with an average chain length of 20-30 units. Serine ADP-ribosylation of proteins constitutes the primary form of ADP-ribosylation of proteins in response to DNA damage. Specificity for the different amino acids is conferred by interacting factors, such as HPF1 and NMNAT1. Following interaction with HPF1, catalyzes serine ADP-ribosylation of target proteins; HPF1 confers serine specificity by completing the PARP1 active site. Also catalyzes tyrosine ADP-ribosylation of target proteins following interaction with HPF1. Following interaction with NMNAT1, catalyzes glutamate and aspartate ADP-ribosylation of target proteins; NMNAT1 confers glutamate and aspartate specificity. PARP1 initiates the repair of DNA breaks: recognizes and binds DNA breaks within chromatin and recruits HPF1, licensing serine ADP-ribosylation of target proteins, such as histones (H2BS6ADPr and H3S10ADPr), thereby promoting decompaction of chromatin and the recruitment of repair factors leading to the reparation of DNA strand breaks. HPF1 initiates serine ADP-ribosylation but restricts the polymerase activity of PARP1 in order to limit the length of poly-ADP-ribose chains. In addition to base excision repair (BER) pathway, also involved in double-strand breaks (DSBs) repair: together with TIMELESS, accumulates at DNA damage sites and promotes homologous recombination repair by mediating poly-ADP-ribosylation. Mediates the poly-ADP-ribosylation of a number of proteins, including itself, APLF, CHFR and NFAT5. In addition to proteins, also able to ADP-ribosylate DNA: catalyzes ADP-ribosylation of DNA strand break termini containing terminal phosphates and a 2'-OH group in single- and double-stranded DNA, respectively. Required for PARP9 and DTX3L recruitment to DNA damage sites. PARP1-dependent PARP9-DTX3L-mediated ubiquitination promotes the rapid and specific recruitment of 53BP1/TP53BP1, UIMC1/RAP80, and BRCA1 to DNA damage sites. PARP1-mediated DNA repair in neurons plays a role in sleep: senses DNA damage in neurons and promotes sleep, facilitating efficient DNA repair. In addition to DNA repair, also involved in other processes, such as transcription regulation, programmed cell death, membrane repair, adipogenesis and innate immunity. Acts as a repressor of transcription: binds to nucleosomes and modulates chromatin structure in a manner similar to histone H1, thereby altering RNA polymerase II. Acts both as a positive and negative regulator of transcription elongation, depending on the context. Acts as a positive regulator of transcription elongation by mediating poly-ADP-ribosylation of NELFE, preventing RNA-binding activity of NELFE and relieving transcription pausing. Acts as a negative regulator of transcription elongation in response to DNA damage by catalyzing poly-ADP-ribosylation of CCNT1, disrupting the phase separation activity of CCNT1 and subsequent activation of CDK9. Involved in replication fork progression following interaction with CARM1: mediates poly-ADP-ribosylation at replication forks, slowing fork progression. Poly-ADP-ribose chains generated by PARP1 also play a role in poly-ADP-ribose-dependent cell death, a process named parthanatos. Also acts as a negative regulator of the cGAS-STING pathway. Acts by mediating poly-ADP-ribosylation of CGAS: PARP1 translocates into the cytosol following phosphorylation by PRKDC and catalyzes poly-ADP-ribosylation and inactivation of CGAS. Acts as a negative regulator of adipogenesis: catalyzes poly-ADP-ribosylation of histone H2B on 'Glu-35' (H2BE35ADPr) following interaction with NMNAT1, inhibiting phosphorylation of H2B at 'Ser-36' (H2BS36ph), thereby blocking expression of pro-adipogenetic genes. Involved in the synthesis of ATP in the nucleus, together with NMNAT1, PARG and NUDT5. Nuclear ATP generation is required for extensive chromatin remodeling events that are energy-consuming. Functionally, promotes AIFM1-mediated apoptosis. This form, which translocates into the cytoplasm following cleavage by caspase-3 (CASP3) and caspase-7 (CASP7) in response to apoptosis, is auto-poly-ADP-ribosylated and serves as a poly-ADP-ribose carrier to induce AIFM1-mediated apoptosis. Its function is as follows. This cleavage form irreversibly binds to DNA breaks and interferes with DNA repair, promoting DNA damage-induced apoptosis. This Bos taurus (Bovine) protein is Poly [ADP-ribose] polymerase 1 (PARP1).